The following is a 188-amino-acid chain: Elongation factor P (188 aa).

K34 is modified (N6-(3,6-diaminohexanoyl)-5-hydroxylysine).

This sequence belongs to the elongation factor P family. May be beta-lysylated on the epsilon-amino group of Lys-34 by the combined action of EpmA and EpmB, and then hydroxylated on the C5 position of the same residue by EpmC (if this protein is present). Lysylation is critical for the stimulatory effect of EF-P on peptide-bond formation. The lysylation moiety may extend toward the peptidyltransferase center and stabilize the terminal 3-CCA end of the tRNA. Hydroxylation of the C5 position on Lys-34 may allow additional potential stabilizing hydrogen-bond interactions with the P-tRNA.

It is found in the cytoplasm. The protein operates within protein biosynthesis; polypeptide chain elongation. Its function is as follows. Involved in peptide bond synthesis. Alleviates ribosome stalling that occurs when 3 or more consecutive Pro residues or the sequence PPG is present in a protein, possibly by augmenting the peptidyl transferase activity of the ribosome. Modification of Lys-34 is required for alleviation. This is Elongation factor P from Pectobacterium carotovorum subsp. carotovorum (strain PC1).